The sequence spans 570 residues: Sulfite reductase [NADPH] hemoprotein beta-component (570 aa).

[4Fe-4S] cluster is bound by residues Cys434, Cys440, Cys479, and Cys483. Position 483 (Cys483) interacts with siroheme.

This sequence belongs to the nitrite and sulfite reductase 4Fe-4S domain family. As to quaternary structure, alpha(8)-beta(8). The alpha component is a flavoprotein, the beta component is a hemoprotein. The cofactor is siroheme. It depends on [4Fe-4S] cluster as a cofactor.

The enzyme catalyses hydrogen sulfide + 3 NADP(+) + 3 H2O = sulfite + 3 NADPH + 4 H(+). It functions in the pathway sulfur metabolism; hydrogen sulfide biosynthesis; hydrogen sulfide from sulfite (NADPH route): step 1/1. Functionally, component of the sulfite reductase complex that catalyzes the 6-electron reduction of sulfite to sulfide. This is one of several activities required for the biosynthesis of L-cysteine from sulfate. The sequence is that of Sulfite reductase [NADPH] hemoprotein beta-component from Salmonella newport (strain SL254).